The sequence spans 123 residues: UPF0482 protein YE2026 (123 aa).

An N-terminal signal peptide occupies residues 1 to 31 (MKITSLPRLMRVFLPVAVLALPLAWQTAALA). Positions 47–66 (GNNDPMSKEQARQSQQQWDD) are disordered.

It belongs to the UPF0482 family.

The protein is UPF0482 protein YE2026 of Yersinia enterocolitica serotype O:8 / biotype 1B (strain NCTC 13174 / 8081).